Reading from the N-terminus, the 115-residue chain is Large ribosomal subunit protein bL19 (115 aa).

It belongs to the bacterial ribosomal protein bL19 family.

In terms of biological role, this protein is located at the 30S-50S ribosomal subunit interface and may play a role in the structure and function of the aminoacyl-tRNA binding site. The chain is Large ribosomal subunit protein bL19 from Streptococcus suis (strain 98HAH33).